Reading from the N-terminus, the 483-residue chain is Aspartyl/glutamyl-tRNA(Asn/Gln) amidotransferase subunit B (483 aa).

The protein belongs to the GatB/GatE family. GatB subfamily. As to quaternary structure, heterotrimer of A, B and C subunits.

It carries out the reaction L-glutamyl-tRNA(Gln) + L-glutamine + ATP + H2O = L-glutaminyl-tRNA(Gln) + L-glutamate + ADP + phosphate + H(+). The catalysed reaction is L-aspartyl-tRNA(Asn) + L-glutamine + ATP + H2O = L-asparaginyl-tRNA(Asn) + L-glutamate + ADP + phosphate + 2 H(+). Allows the formation of correctly charged Asn-tRNA(Asn) or Gln-tRNA(Gln) through the transamidation of misacylated Asp-tRNA(Asn) or Glu-tRNA(Gln) in organisms which lack either or both of asparaginyl-tRNA or glutaminyl-tRNA synthetases. The reaction takes place in the presence of glutamine and ATP through an activated phospho-Asp-tRNA(Asn) or phospho-Glu-tRNA(Gln). This Anaplasma phagocytophilum (strain HZ) protein is Aspartyl/glutamyl-tRNA(Asn/Gln) amidotransferase subunit B.